The following is a 657-amino-acid chain: Hemocyanin (657 aa).

A glycan (N-linked (GlcNAc...) asparagine) is linked at N167. Positions 194, 198, 224, 344, 348, and 384 each coordinate Cu cation. Cystine bridges form between C483–C502 and C562–C609.

This sequence belongs to the tyrosinase family. Hemocyanin subfamily. As to quaternary structure, it consists of at least four very similar subunits. As to expression, hemolymph.

The protein localises to the secreted. It is found in the extracellular space. Hemocyanins are copper-containing oxygen carriers occurring freely dissolved in the hemolymph of many mollusks and arthropods. This is Hemocyanin from Palinurus vulgaris (European spiny lobster).